A 963-amino-acid polypeptide reads, in one-letter code: MGLPEPGPLRLLALLLLLLLLLLLQLQHLAAAAADPLLGGQGPAKDCEKDQFQCRNERCIPSVWRCDEDDDCLDHSDEDDCPKKTCADSDFTCDNGHCIHERWKCDGEEECPDGSDESEATCTKQVCPAEKLSCGPTSHKCVPASWRCDGEKDCEGGADEAGCATLCAPHEFQCGNRSCLAAVFVCDGDDDCGDGSDERGCADPACGPREFRCGGDGGGACIPERWVCDRQFDCEDRSDEAAELCGRPGPGATSAPAACATASQFACRSGECVHLGWRCDGDRDCKDKSDEADCPLGTCRGDEFQCGDGTCVLAIKHCNQEQDCPDGSDEAGCLQGLNECLHNNGGCSHICTDLKIGFECTCPAGFQLLDQKTCGDIDECKDPDACSQICVNYKGYFKCECYPGYEMDLLTKNCKAAAGKSPSLIFTNRHEVRRIDLVKRNYSRLIPMLKNVVALDVEVATNRIYWCDLSYRKIYSAYMDKASDPKEQEVLIDEQLHSPEGLAVDWVHKHIYWTDSGNKTISVATVDGGRRRTLFSRNLSEPRAIAVDPLRGFMYWSDWGDQAKIEKSGLNGVDRQTLVSDNIEWPNGITLDLLSQRLYWVDSKLHQLSSIDFSGGNRKTLISSTDFLSHPFGIAVFEDKVFWTDLENEAIFSANRLNGLEISILAENLNNPHDIVIFHELKQPRAPDACELSVQPNGGCEYLCLPAPQISSHSPKYTCACPDTMWLGPDMKRCYRAPQSTSTTTLASTMTRTVPATTRAPGTTVHRSTYQNHSTETPSLTAAVPSSVSVPRAPSISPSTLSPATSNHSQHYANEDSKMGSTVTAAVIGIIVPIVVIALLCMSGYLIWRNWKRKNTKSMNFDNPVYRKTTEEEDEDELHIGRTAQIGHVYPAAISSFDRPLWAEPCLGETREPEDPAPALKELFVLPGEPRSQLHQLPKNPLSELPVVKSKRVALSLEDDGLP.

The N-terminal stretch at 1–32 (MGLPEPGPLRLLALLLLLLLLLLLQLQHLAAA) is a signal peptide. Residues 42–826 (GPAKDCEKDQ…SKMGSTVTAA (785 aa)) are Extracellular-facing. 7 consecutive LDL-receptor class A domains span residues 46-82 (DCEK…DDCP), 85-123 (TCAD…ATCT), 126-164 (VCPA…AGCA), 166-202 (LCAP…RGCA), 205-246 (ACGP…ELCG), 258-295 (ACAT…ADCP), and 298-334 (TCRG…AGCL). Disulfide bonds link Cys47/Cys59, Cys54/Cys72, Cys66/Cys81, Cys86/Cys98, Cys93/Cys111, Cys105/Cys122, Cys127/Cys141, Cys134/Cys154, Cys148/Cys163, Cys167/Cys179, Cys174/Cys192, Cys186/Cys201, Cys206/Cys221, Cys213/Cys234, Cys228/Cys245, Cys259/Cys272, Cys267/Cys285, Cys279/Cys294, Cys299/Cys311, Cys306/Cys324, Cys318/Cys333, Cys340/Cys351, Cys347/Cys360, Cys362/Cys374, Cys380/Cys390, Cys386/Cys399, and Cys401/Cys414. Positions 64, 67, 69, 71, 77, and 78 each coordinate Ca(2+). Asn176 is a glycosylation site (N-linked (GlcNAc...) asparagine). The EGF-like 1 domain occupies 336 to 375 (GLNECLHNNGGCSHICTDLKIGFECTCPAGFQLLDQKTCG). Residues 376–415 (DIDECKDPDACSQICVNYKGYFKCECYPGYEMDLLTKNCK) enclose the EGF-like 2; calcium-binding domain. Residue Asn441 is glycosylated (N-linked (GlcNAc...) asparagine). LDL-receptor class B repeat units follow at residues 462-508 (NRIY…DWVH), 509-551 (KHIY…DPLR), 552-595 (GFMY…DLLS), 596-639 (QRLY…VFED), and 640-681 (KVFW…FHEL). Residues Asn518 and Asn538 are each glycosylated (N-linked (GlcNAc...) asparagine). Residues 740 to 798 (STSTTTLASTMTRTVPATTRAPGTTVHRSTYQNHSTETPSLTAAVPSSVSVPRAPSISP) form a clustered O-linked oligosaccharides region. The segment at 754-815 (VPATTRAPGT…SNHSQHYANE (62 aa)) is disordered. The segment covering 765 to 777 (VHRSTYQNHSTET) has biased composition (polar residues). An N-linked (GlcNAc...) asparagine glycan is attached at Asn772. A compositionally biased stretch (low complexity) spans 778–799 (PSLTAAVPSSVSVPRAPSISPS). Over residues 800–812 (TLSPATSNHSQHY) the composition is skewed to polar residues. A glycan (N-linked (GlcNAc...) asparagine) is linked at Asn807. A helical transmembrane segment spans residues 827–847 (VIGIIVPIVVIALLCMSGYLI). At 848 to 963 (WRNWKRKNTK…ALSLEDDGLP (116 aa)) the chain is on the cytoplasmic side.

The protein belongs to the LDLR family. As to quaternary structure, homooligomer. Interacts with VLDLR. Reelin associates with two or more receptor molecules. Interacts with DAB1 and JNK-interacting proteins. Interacts with SNX17. Interacts with PCSK9. Interacts with MDK; this interaction is calcium dependent. Interacts with CLU. (Microbial infection) Interacts with Semliki Forest virus E2-E1 heterodimer; this interaction mediates viral entry to host cell. In terms of assembly, (Microbial infection) Interacts (via class A repeats) with Eastern equine encephalitis virus spike glycoprotein E2; this interaction mediates viral entry into host cell. In terms of processing, O-glycosylated. Some alternatively spliced isoforms lack the O-linked sugar domain. Undergoes sequential, furin and gamma-secretase dependent, proteolytic processing, resulting in the extracellular release of the entire ligand-binding domain as a soluble polypeptide and in the intracellular domain (ICD) release into the cytoplasm. The gamma-secretase-dependent proteolytical processing occurs after the bulk of the extracellular domain has been shed, in a furin-dependent manner, in alternatively spliced isoforms carrying the furin cleavage site. Hypoglycosylation (mainly hypo-O-glycosylation) leads to increased extracellular cleavage, which in turn results in accelerating release of the intracellular domain (ICD) by the gamma-secretase. The resulting receptor fragment is able to inhibit Reelin signaling and in particular the Reelin-induced DAB1 phosphorylation. Post-translationally, tyrosine phosphorylated upon apoE binding. In terms of processing, ubiquitinated by MYLIP leading to degradation. As to expression, expressed mainly in brain and placenta. Also expressed in platelets and megakaryocytic cells. Not expressed in the liver.

It is found in the cell membrane. The protein resides in the secreted. In terms of biological role, cell surface receptor for Reelin (RELN) and apolipoprotein E (apoE)-containing ligands. LRP8 participates in transmitting the extracellular Reelin signal to intracellular signaling processes, by binding to DAB1 on its cytoplasmic tail. Reelin acts via both the VLDL receptor (VLDLR) and LRP8 to regulate DAB1 tyrosine phosphorylation and microtubule function in neurons. LRP8 has higher affinity for Reelin than VLDLR. LRP8 is thus a key component of the Reelin pathway which governs neuronal layering of the forebrain during embryonic brain development. Binds the endoplasmic reticulum resident receptor-associated protein (RAP). Binds dimers of beta 2-glycoprotein I and may be involved in the suppression of platelet aggregation in the vasculature. Highly expressed in the initial segment of the epididymis, where it affects the functional expression of clusterin and phospholipid hydroperoxide glutathione peroxidase (PHGPx), two proteins required for sperm maturation. May also function as an endocytic receptor. Not required for endocytic uptake of SEPP1 in the kidney which is mediated by LRP2. Together with its ligand, apolipoprotein E (apoE), may indirectly play a role in the suppression of the innate immune response by controlling the survival of myeloid-derived suppressor cells. Its function is as follows. (Microbial infection) Acts as a receptor for Semliki Forest virus. In Homo sapiens (Human), this protein is Low-density lipoprotein receptor-related protein 8 (LRP8).